A 324-amino-acid polypeptide reads, in one-letter code: Lipoyl synthase, chloroplastic (324 aa).

2 stretches are compositionally biased toward low complexity: residues 1–12 (MCGPTATTVANA) and 20–29 (KGLPPGLKKP). The segment at 1–30 (MCGPTATTVANAGTGGETIKGLPPGLKKPP) is disordered. Residues C58, C63, C69, C86, C90, C93, and S302 each coordinate [4Fe-4S] cluster. Residues 72-291 (GDTGTATVML…AYGEEVIGFR (220 aa)) form the Radical SAM core domain.

Belongs to the radical SAM superfamily. Lipoyl synthase family. [4Fe-4S] cluster is required as a cofactor.

The protein resides in the plastid. The protein localises to the chloroplast. The enzyme catalyses [[Fe-S] cluster scaffold protein carrying a second [4Fe-4S](2+) cluster] + N(6)-octanoyl-L-lysyl-[protein] + 2 oxidized [2Fe-2S]-[ferredoxin] + 2 S-adenosyl-L-methionine + 4 H(+) = [[Fe-S] cluster scaffold protein] + N(6)-[(R)-dihydrolipoyl]-L-lysyl-[protein] + 4 Fe(3+) + 2 hydrogen sulfide + 2 5'-deoxyadenosine + 2 L-methionine + 2 reduced [2Fe-2S]-[ferredoxin]. The protein operates within protein modification; protein lipoylation via endogenous pathway; protein N(6)-(lipoyl)lysine from octanoyl-[acyl-carrier-protein]: step 2/2. Catalyzes the radical-mediated insertion of two sulfur atoms into the C-6 and C-8 positions of the octanoyl moiety bound to the lipoyl domains of lipoate-dependent enzymes, thereby converting the octanoylated domains into lipoylated derivatives. The polypeptide is Lipoyl synthase, chloroplastic (Ostreococcus lucimarinus (strain CCE9901)).